Consider the following 210-residue polypeptide: Prolactin (210 aa).

Positions 1–23 (MARRSQGTKLHLAVLCLVVSCHA) are cleaved as a signal peptide. 2 cysteine pairs are disulfide-bonded: Cys69–Cys183 and Cys200–Cys210.

The protein belongs to the somatotropin/prolactin family. In terms of tissue distribution, pituitary gland.

It localises to the secreted. The protein is Prolactin (prl) of Coregonus autumnalis (Arctic cisco).